Here is a 393-residue protein sequence, read N- to C-terminus: Squamosa promoter-binding-like protein 11 (393 aa).

Residues 74–96 are disordered; the sequence is QSTSINSSSPEAKRCKLASESSP. The segment at 172–249 adopts an SBP-type zinc-finger fold; the sequence is VPRCQIDGCE…SHHNARRRKP (78 aa). Zn(2+)-binding residues include Cys-175, Cys-180, Cys-197, His-200, Cys-216, Cys-219, His-223, and Cys-235. The Bipartite nuclear localization signal motif lies at 232–248; the sequence is KRSCRKRLSHHNARRRK.

It depends on Zn(2+) as a cofactor.

The protein localises to the nucleus. Its function is as follows. Trans-acting factor that binds specifically to the consensus nucleotide sequence 5'-TNCGTACAA-3'. The sequence is that of Squamosa promoter-binding-like protein 11 (SPL11) from Arabidopsis thaliana (Mouse-ear cress).